The following is a 459-amino-acid chain: XK-related protein 3 (459 aa).

A run of 10 helical transmembrane segments spans residues 35 to 55 (FSII…LYMF), 68 to 88 (SFTI…LMFF), 97 to 117 (AALL…LHTI), 169 to 189 (IQAF…SLTI), 199 to 219 (LMTF…ILAI), 238 to 258 (VVMW…FFIA), 264 to 284 (SLPV…LEFW), 300 to 320 (MVGT…INFS), 345 to 365 (ILHY…FRFF), and 377 to 397 (LIAV…LLFY).

It belongs to the XK family. Expressed predominantly, if not exclusively, in testis.

Its subcellular location is the cell membrane. The polypeptide is XK-related protein 3 (XKR3) (Homo sapiens (Human)).